A 117-amino-acid polypeptide reads, in one-letter code: Ig heavy chain V region MOPC 173 (117 aa).

In terms of domain architecture, Ig-like spans 1-116; it reads EVKLLESGGP…WGQGTSVTVS (116 aa). Cysteine 22 and cysteine 96 are oxidised to a cystine.

The protein is Ig heavy chain V region MOPC 173 of Mus musculus (Mouse).